A 478-amino-acid polypeptide reads, in one-letter code: MELFLPSVLLILTVFCFYYLFKPKQTQNAPLPPGHVHWPLKIFETFDYMFKAKTNSIHKFIAERRNKYNTKLFKTSHIGQNMVFLCSPEGNKFLFANDYKLVRSWWPVTFLRVFENAEEEITPEQVIRARKQFLSFFNEPEALAKHVSITDEVVKDHVKLFWDGSDEVTVYPIARKLTFAISCRLLADIRDREILDELLPAMGDVVAAFFALPINLPGTKFNRAVKGSRKCRKIFVDIIKQRKIDLFEKGRKEANDVLSNILLENHRDGIEVNEVALAKNLVSLLSAAFDNPSVTIVSIMKNLAENPEIYARVRSEQLEIAKGRAPGENLAMEDLKKMKFSMNVLSESLRLEAPASGTFREALNDFTYEGYLIPKGWKVHWSTHATHRNPQYFKDPEKFDPARFERNDPIVPYSYVPFGGGHHICPGKDFAKLQILIFIHHVVKKFNWEKVNPDEQMIRVPNLKAAKGLPVRLYPYNK.

The helical transmembrane segment at 1–21 (MELFLPSVLLILTVFCFYYLF) threads the bilayer. Residue Cys-425 coordinates heme.

This sequence belongs to the cytochrome P450 family. Heme serves as cofactor. Mainly expressed in petioles and, to a lower extent, in roots.

The protein resides in the membrane. The catalysed reaction is (1S,3bR,4R,5aR,9aR,9bR,11aS)-1-[(4R)-5-[(2S)-3,3-dimethyloxiran-2-yl]-1,4-dihydroxybutan-2-yl]-3b,6,6,9a,11a-pentamethyl-7-oxo-1H,2H,3bH,4H,5H,5aH,6H,7H,9aH,9bH,10H,11H,11aH-cyclopenta[a]phenanthren-4-yl acetate + reduced [NADPH--hemoprotein reductase] + O2 = (1S,3bR,4R,5aR,9aR,9bR,11aS)-1-(1-hydroxy-4-oxobutan-2-yl)-3b,6,6,9a,11a-pentamethyl-7-oxo-1H,2H,3bH,4H,5H,5aH,6H,7H,9aH,9bH,10H,11H,11aH-cyclopenta[a]phenanthren-4-yl acetate + 2-methylpropanoate + oxidized [NADPH--hemoprotein reductase] + H2O + 2 H(+). Its pathway is secondary metabolite biosynthesis; terpenoid biosynthesis. Its function is as follows. Monooxygenase involved in the biosynthesis of limonoids triterpene natural products such as azadirachtin, an antifeedant widely used as bioinsecticide, and possessing many medicinal applications including anti-tumoral, anti-malarial, anti-rheumatic, antibacterial, anti-inflammatory, anti-pyretic and diuretic effects. Catalyzes the formation of (1S,3bR,4R,5aR,9aR,9bR,11aS)-1-(1-hydroxy-4-oxobutan-2-yl)-3b,6,6,9a,11a-pentamethyl-7-oxo-1H,2H,3bH,4H,5H,5aH,6H,7H,9aH,9bH,10H,11H,11aH-cyclopenta[a]phenanthren-4-yl acetate. The polypeptide is Cytochrome P450 family 716 subfamily AD polypeptide 4 (Melia azedarach (Chinaberry tree)).